We begin with the raw amino-acid sequence, 139 residues long: Oocyte zinc finger protein XlCOF14 (139 aa).

5 consecutive C2H2-type zinc fingers follow at residues 6–28, 33–55, 61–83, 89–111, and 117–139; these read FICS…SNVH, FPCT…QKIH, HKCT…HLSH, FSCF…QLSH, and FVCS…CHIH.

Belongs to the krueppel C2H2-type zinc-finger protein family.

It localises to the nucleus. Functionally, may be involved in transcriptional regulation. This chain is Oocyte zinc finger protein XlCOF14, found in Xenopus laevis (African clawed frog).